The sequence spans 312 residues: Lichenase-2 (312 aa).

An N-terminal signal peptide occupies residues P1–S6. The Proton donor role is filled by E99. A glycan (N-linked (GlcNAc...) asparagine) is linked at N196. The active-site Nucleophile is E238.

It belongs to the glycosyl hydrolase 17 family.

The enzyme catalyses Hydrolysis of (1-&gt;4)-beta-D-glucosidic linkages in beta-D-glucans containing (1-&gt;3)- and (1-&gt;4)-bonds.. Its pathway is glycan metabolism; beta-D-glucan degradation. Functionally, functions in plant cell wall hydrolysis during mobilization of the endosperm in germinating grain or during the growth of vegetative tissues. The protein is Lichenase-2 of Hordeum vulgare (Barley).